Consider the following 360-residue polypeptide: DNA replication and repair protein RecF (360 aa).

30–37 (GENGAGKT) lines the ATP pocket.

This sequence belongs to the RecF family.

Its subcellular location is the cytoplasm. Functionally, the RecF protein is involved in DNA metabolism; it is required for DNA replication and normal SOS inducibility. RecF binds preferentially to single-stranded, linear DNA. It also seems to bind ATP. The sequence is that of DNA replication and repair protein RecF from Deinococcus deserti (strain DSM 17065 / CIP 109153 / LMG 22923 / VCD115).